The primary structure comprises 451 residues: Trigger factor (451 aa).

Residues 165-250 (DDKLTIDFEG…LHQIQAREVL (86 aa)) form the PPIase FKBP-type domain.

This sequence belongs to the FKBP-type PPIase family. Tig subfamily.

The protein resides in the cytoplasm. It carries out the reaction [protein]-peptidylproline (omega=180) = [protein]-peptidylproline (omega=0). In terms of biological role, involved in protein export. Acts as a chaperone by maintaining the newly synthesized protein in an open conformation. Functions as a peptidyl-prolyl cis-trans isomerase. The protein is Trigger factor of Helicobacter acinonychis (strain Sheeba).